Consider the following 277-residue polypeptide: Probable endonuclease 4 (277 aa).

Residues histidine 70, histidine 108, glutamate 145, aspartate 178, histidine 181, histidine 212, aspartate 225, histidine 227, and glutamate 257 each coordinate Zn(2+).

It belongs to the AP endonuclease 2 family. It depends on Zn(2+) as a cofactor.

It catalyses the reaction Endonucleolytic cleavage to 5'-phosphooligonucleotide end-products.. Functionally, endonuclease IV plays a role in DNA repair. It cleaves phosphodiester bonds at apurinic or apyrimidinic (AP) sites, generating a 3'-hydroxyl group and a 5'-terminal sugar phosphate. The protein is Probable endonuclease 4 of Mycoplasmopsis pulmonis (strain UAB CTIP) (Mycoplasma pulmonis).